Consider the following 767-residue polypeptide: Photosystem I P700 chlorophyll a apoprotein A1 (767 aa).

8 helical membrane passes run 72–95, 158–181, 197–221, 305–323, 364–387, 403–429, 451–473, and 548–566; these read IFSA…FHGA, LMAL…FHYH, LNHH…HVSA, IAHH…GHMY, WHAQ…QHMY, IGLF…IAMV, AIIS…LYIH, and FMVH…LILL. Residues Cys590 and Cys599 each contribute to the [4Fe-4S] cluster site. Transmembrane regions (helical) follow at residues 606–627 and 681–703; these read HVFL…HFSW and TSAY…MFLF. Residue His692 participates in chlorophyll a' binding. Chlorophyll a is bound by residues Met700 and Tyr708. Trp709 is a phylloquinone binding site. Residues 741-761 traverse the membrane as a helical segment; that stretch reads AVGVAHYLLGGIATTWAFFHA.

It belongs to the PsaA/PsaB family. The PsaA/B heterodimer binds the P700 chlorophyll special pair and subsequent electron acceptors. PSI consists of a core antenna complex that captures photons, and an electron transfer chain that converts photonic excitation into a charge separation. The cyanobacterial PSI reaction center is composed of one copy each of PsaA,B,C,D,E,F,I,J,K,L,M and X, and forms trimeric complexes. It depends on PSI electron transfer chain: 5 chlorophyll a, 1 chlorophyll a', 2 phylloquinones and 3 4Fe-4S clusters. PSI core antenna: 90 chlorophyll a, 22 carotenoids, 3 phospholipids and 1 galactolipid. P700 is a chlorophyll a/chlorophyll a' dimer, A0 is one or more chlorophyll a, A1 is one or both phylloquinones and FX is a shared 4Fe-4S iron-sulfur center. as a cofactor.

It is found in the cellular thylakoid membrane. It catalyses the reaction reduced [plastocyanin] + hnu + oxidized [2Fe-2S]-[ferredoxin] = oxidized [plastocyanin] + reduced [2Fe-2S]-[ferredoxin]. Its function is as follows. PsaA and PsaB bind P700, the primary electron donor of photosystem I (PSI), as well as the electron acceptors A0, A1 and FX. PSI is a plastocyanin/cytochrome c6-ferredoxin oxidoreductase, converting photonic excitation into a charge separation, which transfers an electron from the donor P700 chlorophyll pair to the spectroscopically characterized acceptors A0, A1, FX, FA and FB in turn. Oxidized P700 is reduced on the lumenal side of the thylakoid membrane by plastocyanin or cytochrome c6. This chain is Photosystem I P700 chlorophyll a apoprotein A1, found in Parasynechococcus marenigrum (strain WH8102).